A 223-amino-acid polypeptide reads, in one-letter code: Deoxyribose-phosphate aldolase (223 aa).

Catalysis depends on Asp-89, which acts as the Proton donor/acceptor. Lys-152 (schiff-base intermediate with acetaldehyde) is an active-site residue. Catalysis depends on Lys-181, which acts as the Proton donor/acceptor.

Belongs to the DeoC/FbaB aldolase family. DeoC type 1 subfamily.

It localises to the cytoplasm. The enzyme catalyses 2-deoxy-D-ribose 5-phosphate = D-glyceraldehyde 3-phosphate + acetaldehyde. It functions in the pathway carbohydrate degradation; 2-deoxy-D-ribose 1-phosphate degradation; D-glyceraldehyde 3-phosphate and acetaldehyde from 2-deoxy-alpha-D-ribose 1-phosphate: step 2/2. In terms of biological role, catalyzes a reversible aldol reaction between acetaldehyde and D-glyceraldehyde 3-phosphate to generate 2-deoxy-D-ribose 5-phosphate. The chain is Deoxyribose-phosphate aldolase from Bacillus cereus (strain AH187).